Here is a 284-residue protein sequence, read N- to C-terminus: MEMO1 family protein MmarC6_1286 (284 aa).

It belongs to the MEMO1 family.

The sequence is that of MEMO1 family protein MmarC6_1286 from Methanococcus maripaludis (strain C6 / ATCC BAA-1332).